We begin with the raw amino-acid sequence, 475 residues long: Transmembrane protein 44 (475 aa).

The Extracellular portion of the chain corresponds to 1–29 (MGEAPSPAPALWDWDYLDRCFARHRVCIS). The helical transmembrane segment at 30 to 50 (FGLWICASSCWIAAHALLLYL) threads the bilayer. At 51 to 61 (RCAQKPRQDQS) the chain is on the cytoplasmic side. The chain crosses the membrane as a helical span at residues 62–82 (ALCAACCLLTSLCDTVGALLA). Topologically, residues 83 to 88 (RQLTIQ) are extracellular. The helical transmembrane segment at 89-109 (VFTGAYLAAIDLVNFMFILFP) threads the bilayer. At 110–135 (VCGSKFKSNSDREARERKRRRQLRAS) the chain is on the cytoplasmic side. Residues 136 to 156 (VFALALPLSLGPCWALWVAVP) form a helical membrane-spanning segment. Residues 157-179 (KASATIRGPQRRLLASLLQENTE) lie on the Extracellular side of the membrane. A helical transmembrane segment spans residues 180-200 (ILGYLLGSVAAFGSWASRIPP). The Cytoplasmic portion of the chain corresponds to 201 to 259 (LSRIAPPPTLGITTQHEIWRGQMSKPSQSPSRSPSGHWRAAAQRQVLGTEMCRGKTFPS). The helical transmembrane segment at 260–280 (IHLWTRLLSALAGLLYASAIV) threads the bilayer. Residues 281-294 (AHDQHPEYLLRATP) are Extracellular-facing. Residues 295 to 315 (WFLTSLGRAALDLAIIFLSCV) traverse the membrane as a helical segment. The Cytoplasmic portion of the chain corresponds to 316-475 (MKSKMRQALG…VRTAHLSDDD (160 aa)). Residues 390–475 (SATRLPGDGQ…VRTAHLSDDD (86 aa)) are disordered. Low complexity predominate over residues 424-436 (SSGSSSEVSSINS). Positions 464 to 475 (DSVRTAHLSDDD) are enriched in basic and acidic residues. Serine 465 is modified (phosphoserine).

The protein resides in the membrane. The sequence is that of Transmembrane protein 44 (TMEM44) from Homo sapiens (Human).